Reading from the N-terminus, the 199-residue chain is Probable GTP-binding protein EngB (199 aa).

One can recognise an EngB-type G domain in the interval 28 to 199; that stretch reads DLPEIALAGR…ESWDTILEYL (172 aa). GTP is bound by residues 36–43, 63–67, 81–84, 148–151, and 180–182; these read GRSNVGKS, GKTQL, DVPG, TKAD, and FSS. Mg(2+)-binding residues include Ser43 and Thr65.

This sequence belongs to the TRAFAC class TrmE-Era-EngA-EngB-Septin-like GTPase superfamily. EngB GTPase family. It depends on Mg(2+) as a cofactor.

Functionally, necessary for normal cell division and for the maintenance of normal septation. This Streptococcus equi subsp. equi (strain 4047) protein is Probable GTP-binding protein EngB.